A 544-amino-acid polypeptide reads, in one-letter code: WD repeat-containing protein 25 (544 aa).

Disordered regions lie at residues 17-74 (DSDS…EDPG) and 183-208 (QRQA…GRAP). A compositionally biased stretch (polar residues) spans 30–39 (FNATGQQKDT). WD repeat units lie at residues 244–286 (GHRG…HCLQ), 290–329 (LHTE…QLFS), 330–373 (GRSD…RSYK), 375–420 (TIQQ…KISN), 424–463 (HERF…RMSR), 469–510 (GHKV…RACT), and 513–544 (GHTQ…KIWH).

As to expression, expressed in heart, muscle, testis, ovary, uterus and prostate.

The chain is WD repeat-containing protein 25 from Homo sapiens (Human).